The primary structure comprises 317 residues: N(5)-(carboxyethyl)ornithine synthase (317 aa).

3 residues coordinate pyruvate: Arg15, Lys71, and His92. Residue 172–177 (GSGNVS) participates in NADP(+) binding.

The protein belongs to the AlaDH/PNT family. CEOS subfamily. As to quaternary structure, homotetramer.

It carries out the reaction N(5)-[1(S)-1-carboxyethyl]-L-ornithine + NADP(+) + H2O = L-ornithine + pyruvate + NADPH + H(+). Functionally, catalyzes the NADPH-dependent reductive condensation between pyruvic acid and the side chain amino group of L-ornithine to form N(5)-(L-1-carboxyethyl)-L-ornithine. To a lesser extent, can also use L-lysine as substrate (yielding N(6)-(L-1-carboxyethyl)-L-lysine), and the D-isomers of the 2 basic amino acids. Can use alpha-keto acids other than pyruvate, e.g. glyoxylate. This chain is N(5)-(carboxyethyl)ornithine synthase (ceo), found in Clostridium botulinum (strain Hall / ATCC 3502 / NCTC 13319 / Type A).